Here is a 1357-residue protein sequence, read N- to C-terminus: MAYSYTEKKRIRKDFSKLPDVMDVPYLLAIQLDSYREFLQAGATKDQFRDVGLHAAFKSVFPIISYSGNAALEYVGYRLGEPAFDVKECVLRGVTYAVPLRVKVRLIIFDKESSNKAIKDIKEQEVYMGEIPLMTENGTFVINGTERVIVSQLHRSPGVFFDHDRGKTHSSGKLLYSARIIPYRGSWLDFEFDPKDCVFVRIDRRRKLPASVLLRALGYTTEQVLDAFYTTNVFHVRGENLNLELVPQRLRGEIAVLDILDDKGKVIVEQGRRITARHINQLEKAGIKELEVPLDYVLGRTTAKVIVHPATGEIIAECNTELNTEILGKIAKAQVVRIETLYTNDIDCGPFVSDTLKIDSTSNQLEALVEIYRMMRPGEPPTKDAAETLFNNLFFSPERYDLSAVGRMKFNRRIGRTEIEGSGVLCKEDIVAVLKTLVDIRNGKGIVDDIDHLGNRRVRCVGEMAENQFRVGLVRVERAVKERLSMAESEGLMPQDLINAKPVAAAVKEFFGSSQLSQFMDQNNPLSEITCKRRVSALGPGGLTRERAGFEVRDVHPTHYGRVCPIETPEGPNIGLINSLAAYARTNQYGFLESPYRVVKEGLVTDEIVFLSAIEEADHVIAQASAAMNDKQELIDELVAVRHLNEFTVKAPADVTLMDVSPKQVVSVAASLIPFLEHDDANRALMGSNMQRQAVPTLRADKPLVGTGMERNVARDSGVCVVARRGGVIDSVDASRIVVRVADDEVETGEAGVDIYNLTKYTRSNQNTCINQRPLVSKGDRVQRSDIMADGPSTDMGELALGQNMRIAFMAWNGFNFEDSICLSERVVQEDRFTTIHIQELTCVARDTKLGPEEITADIPNVGEAALNKLDEAGIVYVGAEVGAGDILVGKVTPKGETQLTPEEKLLRAIFGEKASDVKDTSLRVPTGTKGTVIDVQVFTRDGVERDARALSIEKSQLDEIRKDLNEEFRIVEGATFERLRSALVGRVAEGGAGLKKGQEITNEVLDGLEHGQWFKLRMAEDALNEQLEKAQAYIVDRRRLLDDKFEDKKRKLQQGDDLAPGVLKIVKVYLAIRRRIQPGDKMAGRHGNKGVVSVIMPVEDMPHDANGTPVDIVLNPLGVPSRMNVGQILETHLGLAAKGLGEKINRMLEEQRKVIELRKFLNEIYNEIGGRQEALEDLTDNEILDLAKNLRNGVPMATPVFDGAKESEIKAMLKLADMPESGQMQLFDGRTGNKFERPVTVGYMYMLKLNHLVDDKMHARSTGSYSLVTQQPLGGKAQFGGQRFGEMEVWALEAYGAAYTLQEMLTVKSDDVNGRTKMYKNIVDGDHRMEPGMPESFNVLIKEIRSLGIDIDLETE.

Belongs to the RNA polymerase beta chain family. In terms of assembly, the RNAP catalytic core consists of 2 alpha, 1 beta, 1 beta' and 1 omega subunit. When a sigma factor is associated with the core the holoenzyme is formed, which can initiate transcription.

It carries out the reaction RNA(n) + a ribonucleoside 5'-triphosphate = RNA(n+1) + diphosphate. Functionally, DNA-dependent RNA polymerase catalyzes the transcription of DNA into RNA using the four ribonucleoside triphosphates as substrates. The sequence is that of DNA-directed RNA polymerase subunit beta from Pseudomonas syringae pv. tomato (strain ATCC BAA-871 / DC3000).